The following is a 195-amino-acid chain: Holliday junction branch migration complex subunit RuvA (195 aa).

The domain I stretch occupies residues 1-66 (MNYLVFKVIY…LIIKDLYGFR (66 aa)). The tract at residues 67 to 141 (TYNERLLFID…KYINKVSEKN (75 aa)) is domain II. A region of interest (flexible linker) is located at residue Asn141. The domain III stretch occupies residues 141–195 (NPWAKELSIGLENLGYDKKDIEYAITKVKVDTQQNIDISEIIGCAIKEISLRHEN).

It belongs to the RuvA family. Homotetramer. Forms an RuvA(8)-RuvB(12)-Holliday junction (HJ) complex. HJ DNA is sandwiched between 2 RuvA tetramers; dsDNA enters through RuvA and exits via RuvB. An RuvB hexamer assembles on each DNA strand where it exits the tetramer. Each RuvB hexamer is contacted by two RuvA subunits (via domain III) on 2 adjacent RuvB subunits; this complex drives branch migration. In the full resolvosome a probable DNA-RuvA(4)-RuvB(12)-RuvC(2) complex forms which resolves the HJ.

It is found in the cytoplasm. Functionally, the RuvA-RuvB-RuvC complex processes Holliday junction (HJ) DNA during genetic recombination and DNA repair, while the RuvA-RuvB complex plays an important role in the rescue of blocked DNA replication forks via replication fork reversal (RFR). RuvA specifically binds to HJ cruciform DNA, conferring on it an open structure. The RuvB hexamer acts as an ATP-dependent pump, pulling dsDNA into and through the RuvAB complex. HJ branch migration allows RuvC to scan DNA until it finds its consensus sequence, where it cleaves and resolves the cruciform DNA. In Ureaplasma urealyticum serovar 10 (strain ATCC 33699 / Western), this protein is Holliday junction branch migration complex subunit RuvA.